Here is a 217-residue protein sequence, read N- to C-terminus: MSSSIRGLYAIADTHLLPRQDLGNAVALALQGGASLIQYRDKSQEITRRYKEAESLQRICHQYQAPLIINDDALLAAEIGAEGVHLGQDDSSITSARKILGAKAIIGISCYNDLARAIAAEQAGADYVAFGRLFPSITKPEPIWASLALLREARKNLNLPIVAIGGITPENALQVIEAGASAVAVIGGLFKSRDIRAAAAAYRQHFPSWNLPKPRLF.

4-amino-2-methyl-5-(diphosphooxymethyl)pyrimidine-binding positions include 38-42 (QYRDK) and Asn70. Mg(2+) is bound by residues Asp71 and Asp90. Ser109 is a binding site for 4-amino-2-methyl-5-(diphosphooxymethyl)pyrimidine. A 2-[(2R,5Z)-2-carboxy-4-methylthiazol-5(2H)-ylidene]ethyl phosphate-binding site is contributed by 136–138 (SIT). Residue Lys139 participates in 4-amino-2-methyl-5-(diphosphooxymethyl)pyrimidine binding. Gly166 is a 2-[(2R,5Z)-2-carboxy-4-methylthiazol-5(2H)-ylidene]ethyl phosphate binding site.

Belongs to the thiamine-phosphate synthase family. Mg(2+) is required as a cofactor.

The enzyme catalyses 2-[(2R,5Z)-2-carboxy-4-methylthiazol-5(2H)-ylidene]ethyl phosphate + 4-amino-2-methyl-5-(diphosphooxymethyl)pyrimidine + 2 H(+) = thiamine phosphate + CO2 + diphosphate. It catalyses the reaction 2-(2-carboxy-4-methylthiazol-5-yl)ethyl phosphate + 4-amino-2-methyl-5-(diphosphooxymethyl)pyrimidine + 2 H(+) = thiamine phosphate + CO2 + diphosphate. It carries out the reaction 4-methyl-5-(2-phosphooxyethyl)-thiazole + 4-amino-2-methyl-5-(diphosphooxymethyl)pyrimidine + H(+) = thiamine phosphate + diphosphate. It participates in cofactor biosynthesis; thiamine diphosphate biosynthesis; thiamine phosphate from 4-amino-2-methyl-5-diphosphomethylpyrimidine and 4-methyl-5-(2-phosphoethyl)-thiazole: step 1/1. Condenses 4-methyl-5-(beta-hydroxyethyl)thiazole monophosphate (THZ-P) and 2-methyl-4-amino-5-hydroxymethyl pyrimidine pyrophosphate (HMP-PP) to form thiamine monophosphate (TMP). This chain is Thiamine-phosphate synthase, found in Nitrosococcus oceani (strain ATCC 19707 / BCRC 17464 / JCM 30415 / NCIMB 11848 / C-107).